Consider the following 127-residue polypeptide: Aspartate 1-decarboxylase (127 aa).

S25 (schiff-base intermediate with substrate; via pyruvic acid) is an active-site residue. S25 is subject to Pyruvic acid (Ser). T57 contacts substrate. Y58 serves as the catalytic Proton donor. 73–75 (GAA) is a substrate binding site.

It belongs to the PanD family. As to quaternary structure, heterooctamer of four alpha and four beta subunits. Pyruvate serves as cofactor. Post-translationally, is synthesized initially as an inactive proenzyme, which is activated by self-cleavage at a specific serine bond to produce a beta-subunit with a hydroxyl group at its C-terminus and an alpha-subunit with a pyruvoyl group at its N-terminus.

The protein resides in the cytoplasm. It catalyses the reaction L-aspartate + H(+) = beta-alanine + CO2. It participates in cofactor biosynthesis; (R)-pantothenate biosynthesis; beta-alanine from L-aspartate: step 1/1. Functionally, catalyzes the pyruvoyl-dependent decarboxylation of aspartate to produce beta-alanine. In Neisseria meningitidis serogroup A / serotype 4A (strain DSM 15465 / Z2491), this protein is Aspartate 1-decarboxylase.